We begin with the raw amino-acid sequence, 2143 residues long: Proteasome activator BLM10 (2143 aa).

The tract at residues methionine 1–proline 65 is disordered. A phosphoserine mark is found at serine 11, serine 29, serine 56, and serine 62. Phosphothreonine occurs at positions 64 and 66. At serine 1041 the chain carries Phosphoserine. An HEAT 1 repeat occupies valine 1316–threonine 1355. The bromodomain-like (BRDL) stretch occupies residues cysteine 1648 to aspartate 1732. HEAT repeat units follow at residues proline 1779 to asparagine 1814, tyrosine 1902 to arginine 1941, and glutamate 1985 to glutamate 2023. The YYX motif signature appears at tyrosine 2141–alanine 2143.

The protein belongs to the BLM10 family. According to PubMed:12973301, colocalizes with nascent proteasome. According to PubMed:15778719, associates with proteasome core particles and also forms a complex with regulatory particle-core particle (RP-CP).

It is found in the nucleus. The protein resides in the cytoplasm. In terms of biological role, associated component of the proteasome that specifically recognizes acetylated histones and promotes ATP- and ubiquitin-independent degradation of core histones during DNA damage response. Recognizes and binds acetylated histones via its bromodomain-like (BRDL) region and activates the proteasome by opening the gated channel for substrate entry. Binds to the core proteasome via its C-terminus, which occupies the same binding sites as the proteasomal ATPases, opening the closed structure of the proteasome via an active gating mechanism. Involved in DNA damage response in somatic cells: binds to acetylated histones and promotes degradation of histones following DNA double-strand breaks. This chain is Proteasome activator BLM10 (BLM10), found in Saccharomyces cerevisiae (strain ATCC 204508 / S288c) (Baker's yeast).